Reading from the N-terminus, the 288-residue chain is Fructokinase (288 aa).

Residue T131 coordinates ATP. H154, C169, H172, and C175 together coordinate Zn(2+). ATP contacts are provided by residues P183 and 231–235 (GVMNQ).

This sequence belongs to the ROK (NagC/XylR) family. Mg(2+) serves as cofactor.

The enzyme catalyses D-fructose + ATP = D-fructose 6-phosphate + ADP + H(+). With respect to regulation, inhibition by zinc ions. In Pediococcus pentosaceus, this protein is Fructokinase (scrK).